The primary structure comprises 366 residues: GTPase Obg (366 aa).

The Obg domain maps to 1 to 162 (MRFVDEATIN…RRLRLELKIL (162 aa)). The OBG-type G domain maps to 163-335 (ADAGLLGLPN…VVDAMWRLRD (173 aa)). GTP-binding positions include 169–176 (GLPNAGKS), 194–198 (FTTLT), 218–221 (DIPG), 288–291 (NKID), and 316–318 (SAM). Mg(2+)-binding residues include Ser-176 and Thr-196.

It belongs to the TRAFAC class OBG-HflX-like GTPase superfamily. OBG GTPase family. As to quaternary structure, monomer. The cofactor is Mg(2+).

The protein resides in the cytoplasm. An essential GTPase which binds GTP, GDP and possibly (p)ppGpp with moderate affinity, with high nucleotide exchange rates and a fairly low GTP hydrolysis rate. Plays a role in control of the cell cycle, stress response, ribosome biogenesis and in those bacteria that undergo differentiation, in morphogenesis control. The sequence is that of GTPase Obg from Nitratidesulfovibrio vulgaris (strain ATCC 29579 / DSM 644 / CCUG 34227 / NCIMB 8303 / VKM B-1760 / Hildenborough) (Desulfovibrio vulgaris).